A 317-amino-acid chain; its full sequence is Ribosomal protein L11 methyltransferase (317 aa).

S-adenosyl-L-methionine-binding residues include threonine 158, glycine 179, aspartate 201, and asparagine 244.

The protein belongs to the methyltransferase superfamily. PrmA family.

Its subcellular location is the cytoplasm. It catalyses the reaction L-lysyl-[protein] + 3 S-adenosyl-L-methionine = N(6),N(6),N(6)-trimethyl-L-lysyl-[protein] + 3 S-adenosyl-L-homocysteine + 3 H(+). In terms of biological role, methylates ribosomal protein L11. The chain is Ribosomal protein L11 methyltransferase from Streptococcus agalactiae serotype III (strain NEM316).